A 224-amino-acid chain; its full sequence is PKHD-type hydroxylase KPN78578_12210 (224 aa).

The Fe2OG dioxygenase domain maps to 77-176; that stretch reads TISAPLFNRY…RQASFLWIQS (100 aa). Fe cation-binding residues include His95, Asp97, and His157. Residue Arg167 participates in 2-oxoglutarate binding.

Fe(2+) is required as a cofactor. L-ascorbate serves as cofactor.

This chain is PKHD-type hydroxylase KPN78578_12210, found in Klebsiella pneumoniae subsp. pneumoniae (strain ATCC 700721 / MGH 78578).